The primary structure comprises 638 residues: 1-deoxy-D-xylulose-5-phosphate synthase (638 aa).

Residues H79 and 120–122 (AHS) contribute to the thiamine diphosphate site. Position 151 (D151) interacts with Mg(2+). Thiamine diphosphate is bound by residues 152–153 (GA), N180, Y289, and E371. Mg(2+) is bound at residue N180.

This sequence belongs to the transketolase family. DXPS subfamily. As to quaternary structure, homodimer. The cofactor is Mg(2+). Thiamine diphosphate serves as cofactor.

It catalyses the reaction D-glyceraldehyde 3-phosphate + pyruvate + H(+) = 1-deoxy-D-xylulose 5-phosphate + CO2. It participates in metabolic intermediate biosynthesis; 1-deoxy-D-xylulose 5-phosphate biosynthesis; 1-deoxy-D-xylulose 5-phosphate from D-glyceraldehyde 3-phosphate and pyruvate: step 1/1. Functionally, catalyzes the acyloin condensation reaction between C atoms 2 and 3 of pyruvate and glyceraldehyde 3-phosphate to yield 1-deoxy-D-xylulose-5-phosphate (DXP). The protein is 1-deoxy-D-xylulose-5-phosphate synthase of Rhizobium etli (strain CIAT 652).